The following is a 157-amino-acid chain: Ribosome maturation factor RimP (157 aa).

This sequence belongs to the RimP family.

The protein resides in the cytoplasm. Functionally, required for maturation of 30S ribosomal subunits. This is Ribosome maturation factor RimP from Thermobifida fusca (strain YX).